The chain runs to 396 residues: Acetate kinase (396 aa).

A Mg(2+)-binding site is contributed by asparagine 7. Residue lysine 14 participates in ATP binding. Arginine 91 lines the substrate pocket. Aspartate 148 (proton donor/acceptor) is an active-site residue. ATP is bound by residues 208–212 (HLGNG), 283–285 (DFR), and 331–335 (GIGEN). Glutamate 384 provides a ligand contact to Mg(2+).

The protein belongs to the acetokinase family. Homodimer. Mg(2+) serves as cofactor. Requires Mn(2+) as cofactor.

Its subcellular location is the cytoplasm. It carries out the reaction acetate + ATP = acetyl phosphate + ADP. It participates in metabolic intermediate biosynthesis; acetyl-CoA biosynthesis; acetyl-CoA from acetate: step 1/2. In terms of biological role, catalyzes the formation of acetyl phosphate from acetate and ATP. Can also catalyze the reverse reaction. In Desulforamulus reducens (strain ATCC BAA-1160 / DSM 100696 / MI-1) (Desulfotomaculum reducens), this protein is Acetate kinase.